A 260-amino-acid polypeptide reads, in one-letter code: MGRPPPCAIQPWILLLLFMGAWAGLTRAQGSKILEGRECIPHSQPWQAALFQGERLICGGVLVGDRWVLTAAHCKKQKYSVRLGDHSLQSRDQPEQEIQVAQSIQHPCYNNSNPEDHSHDIMLIRLQNSANLGDKVKPVQLANLCPKVGQKCIISGWGTVTSPQENFPNTLNCAEVKIYSQNKCERAYPGKITEGMVCAGSSNGADTCQGDSGGPLVCDGMLQGITSWGSDPCGKPEKPGVYTKICRYTTWIKKTMDNRD.

The signal sequence occupies residues 1–28 (MGRPPPCAIQPWILLLLFMGAWAGLTRA). A propeptide spanning residues 29-32 (QGSK) is cleaved from the precursor. The Peptidase S1 domain occupies 33–257 (ILEGRECIPH…YTTWIKKTMD (225 aa)). 6 disulfide bridges follow: Cys39–Cys173, Cys58–Cys74, Cys145–Cys246, Cys152–Cys218, Cys184–Cys198, and Cys208–Cys233. His73 acts as the Charge relay system in catalysis. An N-linked (GlcNAc...) asparagine glycan is attached at Asn110. Catalysis depends on Asp120, which acts as the Charge relay system. Residue Ser212 is the Charge relay system of the active site.

This sequence belongs to the peptidase S1 family. Kallikrein subfamily. In terms of assembly, interacts with SPINK9. In terms of tissue distribution, expressed in the limbic system of mouse brain and is localized at highest concentration in pyramidal neurons of the hippocampal CA1-3 subfields. Also detected in spinal cord gray matter and in keratinized stratified epithelia of epidermis, hair, tongue, palate, nasal cavity, pharynges, esophagus and forestomach. In skin and mucus membranes, expressed in stratum spinosum and stratum granulosum. Expressed during estrus in vaginal epithelial cells but not stromal cells. Within the vaginal epithelium, expressed in prickle cells, granular cells and parakeratotic cells but not in basal cells. Not expressed in uterus. Expressed in the keratinocytes.

It is found in the secreted. The protein resides in the cytoplasm. The enzyme catalyses Cleavage of amide substrates following the basic amino acids Arg or Lys at the P1 position, with a preference for Arg over Lys.. Strongly inhibited by diisopropyl fluorophosphate, leupeptin and (4-amidinophenyl)methanesulfonyl 1-fluoride. Its function is as follows. Serine protease which is capable of degrading a number of proteins such as casein, fibrinogen, kininogen, fibronectin and collagen type IV. Also cleaves L1CAM in response to increased neural activity. Induces neurite outgrowth and fasciculation of cultured hippocampal neurons. Plays a role in the formation and maturation of orphan and small synaptic boutons in the Schaffer-collateral pathway, regulates Schaffer-collateral long-term potentiation in the hippocampus and is required for memory acquisition and synaptic plasticity. Involved in skin desquamation and keratinocyte proliferation. Plays a role in the secondary phase of pathogenesis following spinal cord injury. The chain is Kallikrein-8 (Klk8) from Mus musculus (Mouse).